Consider the following 290-residue polypeptide: Nucleotide-binding protein XF_1405 (290 aa).

Residue 13–20 participates in ATP binding; that stretch reads GLSGSGKS. 65-68 provides a ligand contact to GTP; sequence DIRS.

The protein belongs to the RapZ-like family.

In terms of biological role, displays ATPase and GTPase activities. The sequence is that of Nucleotide-binding protein XF_1405 from Xylella fastidiosa (strain 9a5c).